Here is a 153-residue protein sequence, read N- to C-terminus: Cyanate hydratase (153 aa).

Residues R88, E91, and S114 contribute to the active site.

This sequence belongs to the cyanase family.

It carries out the reaction cyanate + hydrogencarbonate + 3 H(+) = NH4(+) + 2 CO2. In terms of biological role, catalyzes the reaction of cyanate with bicarbonate to produce ammonia and carbon dioxide. The polypeptide is Cyanate hydratase (Mycolicibacterium vanbaalenii (strain DSM 7251 / JCM 13017 / BCRC 16820 / KCTC 9966 / NRRL B-24157 / PYR-1) (Mycobacterium vanbaalenii)).